A 263-amino-acid chain; its full sequence is Cell division coordinator CpoB (263 aa).

The signal sequence occupies residues 1-26 (MSSNFRHQLLSLSLLVGIAAPWAAFA). The stretch at 44-88 (QLERISNAHSQLLTQLQQQLSDNQSDIDSLRGQIQENQYQLNQVV) forms a coiled coil. Positions 106 to 123 (AAAQSTSGDQSGAAASTT) are enriched in low complexity. Residues 106–139 (AAAQSTSGDQSGAAASTTPTADAGTANAGAPVKS) are disordered. TPR repeat units follow at residues 143–176 (NTDYNAAIALVQDKSRQDDAMVAFQNFIKNYPDS), 180–213 (PNANYWLGQLNYNKGKKDDAAYYFASVVKNYPKS), and 217–250 (ADAMFKVGVIMQDKGDTAKAKAVYQQVISKYPGT).

The protein belongs to the CpoB family. In terms of assembly, homotrimer. Interacts directly with the central domain of TolA and with PBP1B. Binding to TolA disrupts the homotrimer to form a YbgF/TolA heterodimer with weak affinity. Forms a quaternary complex with PBP1B-LpoB and TolA.

The protein localises to the periplasm. Mediates coordination of peptidoglycan synthesis and outer membrane constriction during cell division. Promotes physical and functional coordination of the PBP1B-LpoB and Tol machines, and regulates PBP1B activity in response to Tol energy state. In Escherichia coli (strain K12), this protein is Cell division coordinator CpoB.